The chain runs to 245 residues: MDGWQRAFVLHSRPWSETSLMLDVFTEESGRVRLVAKGARSKRSNLKGALQPFTPLLVRFGGRGEVKTLRSAEAVSLALPLSGITLYSGLYVNELISRVLEHETRFSELFFDYLHCIQALAGTSGSPEPALRRFELALLGHLGYGVDFLHCAGSGEPVDDTMTYRYREEKGFIASLVIDNNTFTGHHLKALASREFPDVDTLRAAKRFTRIALKPYLGGKPLKSRELFRQFMPARKARADNTNND.

The protein belongs to the RecO family.

Functionally, involved in DNA repair and RecF pathway recombination. The protein is DNA repair protein RecO of Klebsiella pneumoniae (strain 342).